The primary structure comprises 257 residues: UPF0246 protein swp_3736 (257 aa).

It belongs to the UPF0246 family.

The sequence is that of UPF0246 protein swp_3736 from Shewanella piezotolerans (strain WP3 / JCM 13877).